Reading from the N-terminus, the 100-residue chain is MELTPREKDKLLIFTAALLAERRKGRGLKLNYPEAVAFISAAIMEGARDGKTVADLMHYGTTLLTRNDVMDGVAEMIPDIQVEATFPDGTKLVTVHHPIV.

It belongs to the urease gamma subunit family. Heterotrimer of UreA (gamma), UreB (beta) and UreC (alpha) subunits. Three heterotrimers associate to form the active enzyme.

It localises to the cytoplasm. It carries out the reaction urea + 2 H2O + H(+) = hydrogencarbonate + 2 NH4(+). The protein operates within nitrogen metabolism; urea degradation; CO(2) and NH(3) from urea (urease route): step 1/1. This chain is Urease subunit gamma, found in Ralstonia pickettii (strain 12J).